The following is a 306-amino-acid chain: Voltage-dependent anion channel-forming protein RSc3414 (306 aa).

The next 4 membrane-spanning stretches (helical) occupy residues 28–48 (LFLIFCISLVAMAVHVHWLPI), 50–70 (VNLSTTPFSLIGIALAVFLGF), 213–233 (YSVMIHRTVYFFCAALPFGLV), and 239–259 (FTPVFSVFVAYAFMAHEAIAA).

This sequence belongs to the anion channel-forming bestrophin (TC 1.A.46) family.

Its subcellular location is the cell membrane. This Ralstonia nicotianae (strain ATCC BAA-1114 / GMI1000) (Ralstonia solanacearum) protein is Voltage-dependent anion channel-forming protein RSc3414.